A 338-amino-acid polypeptide reads, in one-letter code: Methionyl-tRNA formyltransferase (338 aa).

110–113 serves as a coordination point for (6S)-5,6,7,8-tetrahydrofolate; sequence SLLP.

It belongs to the Fmt family.

The catalysed reaction is L-methionyl-tRNA(fMet) + (6R)-10-formyltetrahydrofolate = N-formyl-L-methionyl-tRNA(fMet) + (6S)-5,6,7,8-tetrahydrofolate + H(+). Attaches a formyl group to the free amino group of methionyl-tRNA(fMet). The formyl group appears to play a dual role in the initiator identity of N-formylmethionyl-tRNA by promoting its recognition by IF2 and preventing the misappropriation of this tRNA by the elongation apparatus. The polypeptide is Methionyl-tRNA formyltransferase (Synechococcus sp. (strain CC9605)).